The following is a 117-amino-acid chain: Large ribosomal subunit protein eL18 (117 aa).

Belongs to the eukaryotic ribosomal protein eL18 family.

The sequence is that of Large ribosomal subunit protein eL18 from Archaeoglobus fulgidus (strain ATCC 49558 / DSM 4304 / JCM 9628 / NBRC 100126 / VC-16).